The chain runs to 504 residues: ATP synthase subunit alpha 2 (504 aa).

169-176 contributes to the ATP binding site; sequence GDRQTGKT.

This sequence belongs to the ATPase alpha/beta chains family. F-type ATPases have 2 components, CF(1) - the catalytic core - and CF(0) - the membrane proton channel. CF(1) has five subunits: alpha(3), beta(3), gamma(1), delta(1), epsilon(1). CF(0) has three main subunits: a(1), b(2) and c(9-12). The alpha and beta chains form an alternating ring which encloses part of the gamma chain. CF(1) is attached to CF(0) by a central stalk formed by the gamma and epsilon chains, while a peripheral stalk is formed by the delta and b chains.

It is found in the cell membrane. The catalysed reaction is ATP + H2O + 4 H(+)(in) = ADP + phosphate + 5 H(+)(out). Functionally, produces ATP from ADP in the presence of a proton gradient across the membrane. The alpha chain is a regulatory subunit. This Listeria welshimeri serovar 6b (strain ATCC 35897 / DSM 20650 / CCUG 15529 / CIP 8149 / NCTC 11857 / SLCC 5334 / V8) protein is ATP synthase subunit alpha 2.